The primary structure comprises 255 residues: 4-hydroxy-tetrahydrodipicolinate reductase (255 aa).

NAD(+)-binding positions include 9 to 14 (GFKGRM), 89 to 91 (GTT), and 115 to 118 (APNF). Catalysis depends on His-145, which acts as the Proton donor/acceptor. His-146 is a (S)-2,3,4,5-tetrahydrodipicolinate binding site. Lys-149 (proton donor) is an active-site residue. 155–156 (GT) is a (S)-2,3,4,5-tetrahydrodipicolinate binding site.

This sequence belongs to the DapB family.

It localises to the cytoplasm. It carries out the reaction (S)-2,3,4,5-tetrahydrodipicolinate + NAD(+) + H2O = (2S,4S)-4-hydroxy-2,3,4,5-tetrahydrodipicolinate + NADH + H(+). The enzyme catalyses (S)-2,3,4,5-tetrahydrodipicolinate + NADP(+) + H2O = (2S,4S)-4-hydroxy-2,3,4,5-tetrahydrodipicolinate + NADPH + H(+). It participates in amino-acid biosynthesis; L-lysine biosynthesis via DAP pathway; (S)-tetrahydrodipicolinate from L-aspartate: step 4/4. Functionally, catalyzes the conversion of 4-hydroxy-tetrahydrodipicolinate (HTPA) to tetrahydrodipicolinate. The sequence is that of 4-hydroxy-tetrahydrodipicolinate reductase from Streptococcus mutans serotype c (strain ATCC 700610 / UA159).